The chain runs to 291 residues: Phosphate import ATP-binding protein PstB (291 aa).

The region spanning 44–286 (VKAREVNVFY…PEEKRTQDYI (243 aa)) is the ABC transporter domain. Position 76–83 (76–83 (GPSGCGKS)) interacts with ATP.

Belongs to the ABC transporter superfamily. Phosphate importer (TC 3.A.1.7) family. The complex is composed of two ATP-binding proteins (PstB), two transmembrane proteins (PstC and PstA) and a solute-binding protein (PstS).

The protein localises to the cell inner membrane. The catalysed reaction is phosphate(out) + ATP + H2O = ADP + 2 phosphate(in) + H(+). In terms of biological role, part of the ABC transporter complex PstSACB involved in phosphate import. Responsible for energy coupling to the transport system. The chain is Phosphate import ATP-binding protein PstB from Chelativorans sp. (strain BNC1).